A 181-amino-acid polypeptide reads, in one-letter code: Alkyl hydroperoxide reductase AhpD (181 aa).

The active-site Proton donor is Cys131. Cys131 and Cys134 are oxidised to a cystine. Cys134 serves as the catalytic Cysteine sulfenic acid (-SOH) intermediate.

It belongs to the AhpD family.

The catalysed reaction is N(6)-[(R)-dihydrolipoyl]-L-lysyl-[lipoyl-carrier protein] + a hydroperoxide = N(6)-[(R)-lipoyl]-L-lysyl-[lipoyl-carrier protein] + an alcohol + H2O. Functionally, antioxidant protein with alkyl hydroperoxidase activity. Required for the reduction of the AhpC active site cysteine residues and for the regeneration of the AhpC enzyme activity. This chain is Alkyl hydroperoxide reductase AhpD, found in Rhodopseudomonas palustris (strain BisB18).